Consider the following 172-residue polypeptide: MIGAQKKQSGKKTASRAVRKPAKKVAAKRTVKKATVRKTAVKKPAVRKTAAKKTVAKKTTAKRTVRKTVAKKPAVKKVAAKRVVKKTVAKKTTAKRAVRKTVAKKPVARKTTVAKGSPKKAAACALACHKNHKHTSSCKRVCSSTATRKHGSKSRVRTAHGWRHQLIKMMSR.

The disordered stretch occupies residues 1-77 (MIGAQKKQSG…TVAKKPAVKK (77 aa)). Residues 8 to 77 (QSGKKTASRA…TVAKKPAVKK (70 aa)) show a composition bias toward basic residues.

Belongs to the histone H1/H5 family. HCT subfamily.

Functionally, might have a role in establishing the nucleoid structure of elementary bodies. The protein is Histone H1-like protein HC2 (hctB) of Chlamydia pneumoniae (Chlamydophila pneumoniae).